The primary structure comprises 493 residues: Succinate-semialdehyde dehydrogenase [NADP(+)] 2 (493 aa).

242–247 (GSTNVG) provides a ligand contact to NAD(+). Residue Glu-264 is part of the active site. Residue Cys-298 is the Nucleophile of the active site.

It belongs to the aldehyde dehydrogenase family. In terms of assembly, homotetramer.

Its subcellular location is the cytoplasm. It catalyses the reaction succinate semialdehyde + NAD(+) + H2O = succinate + NADH + 2 H(+). The enzyme catalyses succinate semialdehyde + NADP(+) + H2O = succinate + NADPH + 2 H(+). It functions in the pathway amino-acid degradation; 4-aminobutanoate degradation. In terms of biological role, catalyzes the oxidation of succinate semialdehyde to succinate. Can utilize both NAD(+) or NADP(+) as a coenzyme. Functions in the GABA shunt, which allows to bypass 2 reactions in the TCA cycle by removing alpha-ketoglutarate from the cycle and feeding succinate and NADH back into the cycle. The polypeptide is Succinate-semialdehyde dehydrogenase [NADP(+)] 2 (ssd2) (Schizosaccharomyces pombe (strain 972 / ATCC 24843) (Fission yeast)).